We begin with the raw amino-acid sequence, 325 residues long: Elongation factor P--(R)-beta-lysine ligase (325 aa).

A substrate-binding site is contributed by 76–78 (SPE). Residues 100–102 (RNE) and Asn109 contribute to the ATP site. Position 118 (Tyr118) interacts with substrate. 244-245 (EL) serves as a coordination point for ATP. Residue Glu251 coordinates substrate. Gly300 contributes to the ATP binding site.

It belongs to the class-II aminoacyl-tRNA synthetase family. EpmA subfamily. In terms of assembly, homodimer.

The catalysed reaction is D-beta-lysine + L-lysyl-[protein] + ATP = N(6)-((3R)-3,6-diaminohexanoyl)-L-lysyl-[protein] + AMP + diphosphate + H(+). With EpmB is involved in the beta-lysylation step of the post-translational modification of translation elongation factor P (EF-P). Catalyzes the ATP-dependent activation of (R)-beta-lysine produced by EpmB, forming a lysyl-adenylate, from which the beta-lysyl moiety is then transferred to the epsilon-amino group of a conserved specific lysine residue in EF-P. The sequence is that of Elongation factor P--(R)-beta-lysine ligase from Proteus mirabilis (strain HI4320).